A 175-amino-acid chain; its full sequence is tRNA-specific adenosine deaminase 2 (175 aa).

The 126-residue stretch at 8–133 (EEIQNWMHKA…SVLNVSGDDI (126 aa)) folds into the CMP/dCMP-type deaminase domain. His59 contributes to the Zn(2+) binding site. Catalysis depends on Glu61, which acts as the Proton donor. Positions 95 and 98 each coordinate Zn(2+).

Belongs to the cytidine and deoxycytidylate deaminase family. ADAT2 subfamily. It depends on Zn(2+) as a cofactor.

The enzyme catalyses adenosine(34) in tRNA + H2O + H(+) = inosine(34) in tRNA + NH4(+). Its function is as follows. Probably participates in deamination of adenosine-34 to inosine in many tRNAs. This chain is tRNA-specific adenosine deaminase 2 (adat2), found in Xenopus laevis (African clawed frog).